The following is a 231-amino-acid chain: ATP phosphoribosyltransferase (231 aa).

It belongs to the ATP phosphoribosyltransferase family. Short subfamily. As to quaternary structure, heteromultimer composed of HisG and HisZ subunits.

The protein resides in the cytoplasm. The enzyme catalyses 1-(5-phospho-beta-D-ribosyl)-ATP + diphosphate = 5-phospho-alpha-D-ribose 1-diphosphate + ATP. It functions in the pathway amino-acid biosynthesis; L-histidine biosynthesis; L-histidine from 5-phospho-alpha-D-ribose 1-diphosphate: step 1/9. In terms of biological role, catalyzes the condensation of ATP and 5-phosphoribose 1-diphosphate to form N'-(5'-phosphoribosyl)-ATP (PR-ATP). Has a crucial role in the pathway because the rate of histidine biosynthesis seems to be controlled primarily by regulation of HisG enzymatic activity. This is ATP phosphoribosyltransferase (hisG) from Rhizobium meliloti (strain 1021) (Ensifer meliloti).